The sequence spans 168 residues: MSGLKAGDSFPADVVFSYIPWTEEKGEITSCGIPINYYASKEWADKKVILFALPGAFTPVCSARHVPEYIERLPEIRAKGVDVVAVLAYNDAFVMSAWGKANGVKNDDILFLSDPEAKFSKSIGWADEEGRTKRYAIVLDHGKVTYAALEPAKNHLEFSSAETVIKHL.

The region spanning 4–158 (LKAGDSFPAD…LEPAKNHLEF (155 aa)) is the Thioredoxin domain. The active-site Cysteine sulfenic acid (-SOH) intermediate is C61.

It belongs to the peroxiredoxin family. Prx5 subfamily. As to quaternary structure, homodimer; disulfide-linked, upon oxidation. Interacts with thioredoxin trxA.

It catalyses the reaction a hydroperoxide + [thioredoxin]-dithiol = an alcohol + [thioredoxin]-disulfide + H2O. In terms of biological role, thiol-specific peroxidase that catalyzes the reduction of hydrogen peroxide and organic hydroperoxides to water and alcohols, respectively. Plays a role in cell protection against oxidative stress by detoxifying peroxides and as sensor of hydrogen peroxide-mediated signaling events. Involved in osmoadaptation. The protein is Putative peroxiredoxin prxA of Emericella nidulans (strain FGSC A4 / ATCC 38163 / CBS 112.46 / NRRL 194 / M139) (Aspergillus nidulans).